Here is a 290-residue protein sequence, read N- to C-terminus: Aquaporin PIP2-1 (290 aa).

The disordered stretch occupies residues 1 to 20; it reads MGKDDVIESGAGGGEFAAKD. 2 consecutive transmembrane segments (helical) span residues 43-63 and 80-100; these read AVIAEFIATLLFLYITVATVI and CGGVGVLGIAWAFGGMIFVLV. Residues 112–114 carry the NPA 1 motif; that stretch reads NPA. 3 consecutive transmembrane segments (helical) span residues 131–151, 173–193, and 205–225; these read LLYIVAQCLGAICGVGLVKAF, GTGLGAEIIGTFVLVYTVFSA, and VPVLAPLPIGFAVFMVHLATI. The NPA 2 motif lies at 233-235; it reads NPA. Residues 255-275 traverse the membrane as a helical segment; sequence IFWVGPLVGAAIAAFYHQYIL.

It belongs to the MIP/aquaporin (TC 1.A.8) family. PIP (TC 1.A.8.11) subfamily. Homomers. Can interact with PIP1-2 to form heteromers. Expressed in roots.

Its subcellular location is the cell membrane. In terms of biological role, water channel required to facilitate the transport of water across cell membrane. Active as homomers. Increased activity when heteromerization with PIP1-2. The protein is Aquaporin PIP2-1 (PIP2-1) of Zea mays (Maize).